We begin with the raw amino-acid sequence, 179 residues long: Peptide methionine sulfoxide reductase MsrA (179 aa).

Cysteine 14 is an active-site residue.

The protein belongs to the MsrA Met sulfoxide reductase family.

The enzyme catalyses L-methionyl-[protein] + [thioredoxin]-disulfide + H2O = L-methionyl-(S)-S-oxide-[protein] + [thioredoxin]-dithiol. It carries out the reaction [thioredoxin]-disulfide + L-methionine + H2O = L-methionine (S)-S-oxide + [thioredoxin]-dithiol. Functionally, has an important function as a repair enzyme for proteins that have been inactivated by oxidation. Catalyzes the reversible oxidation-reduction of methionine sulfoxide in proteins to methionine. The polypeptide is Peptide methionine sulfoxide reductase MsrA (Nitrobacter winogradskyi (strain ATCC 25391 / DSM 10237 / CIP 104748 / NCIMB 11846 / Nb-255)).